Reading from the N-terminus, the 361-residue chain is DNA polymerase IV 3 (361 aa).

Residues I12–G192 enclose the UmuC domain. Residues D16 and D110 each contribute to the Mg(2+) site. Residue E111 is part of the active site.

Belongs to the DNA polymerase type-Y family. Monomer. Mg(2+) serves as cofactor.

Its subcellular location is the cytoplasm. It carries out the reaction DNA(n) + a 2'-deoxyribonucleoside 5'-triphosphate = DNA(n+1) + diphosphate. Functionally, poorly processive, error-prone DNA polymerase involved in untargeted mutagenesis. Copies undamaged DNA at stalled replication forks, which arise in vivo from mismatched or misaligned primer ends. These misaligned primers can be extended by PolIV. Exhibits no 3'-5' exonuclease (proofreading) activity. May be involved in translesional synthesis, in conjunction with the beta clamp from PolIII. The chain is DNA polymerase IV 3 (dinB3) from Mesorhizobium japonicum (strain LMG 29417 / CECT 9101 / MAFF 303099) (Mesorhizobium loti (strain MAFF 303099)).